Reading from the N-terminus, the 1745-residue chain is Tight junction protein 1 (1745 aa).

The PDZ 1 domain maps to 23 to 110 (TVTLHRAPGF…NAKITIRRKK (88 aa)). The segment covering 102 to 112 (AKITIRRKKKV) has biased composition (basic residues). The segment at 102–189 (AKITIRRKKK…QPAKPTKVTL (88 aa)) is disordered. Residues 123-136 (PVSDNEDDSYDEEV) show a composition bias toward acidic residues. Ser-125 carries the phosphoserine modification. Tyr-132 is subject to Phosphotyrosine. Positions 149-175 (RRSEKSWARDRSASRERSLSPRSDRRS) are enriched in basic and acidic residues. Ser-175, Ser-178, and Ser-179 each carry phosphoserine. The residue at position 185 (Thr-185) is a Phosphothreonine. The PDZ 2 domain maps to 186-264 (KVTLVKSRKN…KLKMVVQRDE (79 aa)). 2 positions are modified to phosphoserine: Ser-212 and Ser-241. The residue at position 267 (Thr-267) is a Phosphothreonine. Residues Ser-275, Ser-277, Ser-280, Ser-284, Ser-290, Ser-294, Ser-297, Ser-300, Ser-323, Ser-329, Ser-334, Ser-337, and Ser-353 each carry the phosphoserine modification. Residues 296-364 (ASDHSGRSHD…PVKHVDDHPP (69 aa)) form a disordered region. A compositionally biased stretch (basic and acidic residues) spans 299–308 (HSGRSHDRPP). Residues 325–338 (HSTQSPQQPSNGSL) are compositionally biased toward polar residues. Thr-354 carries the post-translational modification Phosphothreonine. Residues 421–502 (SMKLVKFRKG…GEEVTILAQK (82 aa)) enclose the PDZ 3 domain. The SH3 domain maps to 516-584 (GDSFYIRTHF…PNKNRAEQLA (69 aa)). The Guanylate kinase-like domain maps to 610–791 (SKRNLRKSRE…WYGALKEAIQ (182 aa)). Residues Ser-617 and Ser-622 each carry the phosphoserine modification. The occludin (OCLN)-binding region stretch occupies residues 633-876 (YERVVLREAG…GTPPESAITR (244 aa)). A Phosphothreonine modification is found at Thr-809. Phosphoserine is present on residues Ser-810 and Ser-821. Phosphotyrosine is present on Tyr-822. Phosphoserine occurs at positions 824, 828, and 837. Disordered stretches follow at residues 825–944 (APGS…SASA) and 956–1042 (LEEP…YEPQ). 5 positions are modified to phosphothreonine: Thr-846, Thr-848, Thr-854, Thr-861, and Thr-868. Basic and acidic residues predominate over residues 879 to 892 (EPVREDSSGMHHEN). Low complexity predominate over residues 893–906 (QTYPPYSPQAQPQA). Ser-912 is modified (phosphoserine). A compositionally biased stretch (basic and acidic residues) spans 998–1014 (DPAKVYRKEPYSEEMMR). Ser-1071 carries the phosphoserine modification. Residues 1090–1586 (QWSYYDDKQP…STQPPEFDSG (497 aa)) are disordered. Over residues 1106 to 1124 (ENQHPRDLDSRQHPEEASE) the composition is skewed to basic and acidic residues. Ser-1138 is subject to Phosphoserine. Residues Tyr-1139 and Tyr-1164 each carry the phosphotyrosine modification. The interval 1150–1370 (RTSTLRHEEQ…FDRRSFESKP (221 aa)) is actin-binding region (ABR). Basic and acidic residues-rich tracts occupy residues 1268–1285 (KMFE…KDVN) and 1335–1346 (PPEDIVRSNHYD). Phosphotyrosine is present on Tyr-1353. The residue at position 1365 (Ser-1365) is a Phosphoserine. Low complexity predominate over residues 1388–1399 (SQSQPNFSSYSS). A compositionally biased stretch (basic and acidic residues) spans 1401 to 1418 (GKPETDAVDRSFSEKRYD). Position 1411 is a phosphoserine (Ser-1411). Over residues 1431 to 1445 (SQYSQPAPPLSSSSL) the composition is skewed to low complexity. 2 stretches are compositionally biased toward polar residues: residues 1455–1468 (EGNS…NSYM) and 1510–1519 (AEQTQKTITP). Over residues 1535–1544 (PFERKFESPK) the composition is skewed to basic and acidic residues. Ser-1542 carries the phosphoserine modification. The span at 1561 to 1580 (SSKTPTSPKTLMKAHSSTQP) shows a compositional bias: polar residues. Ser-1614 bears the Phosphoserine mark. One can recognise a ZU5 domain in the interval 1631-1745 (ATARGIFNSN…NCVSVLIDHF (115 aa)).

Belongs to the MAGUK family. In terms of assembly, homodimer. Forms heterodimers TJP3. Forms a heterodimer (via PDZ2 domain) with TJP2/ZO2 (via PDZ2 domain). Interacts with OCLN, CALM, claudins, CGN/cingulin, CXADR, GJD3 and UBN1. Interacts (via ZU5 domain) with CDC42BPB. Interacts (via PDZ domain) with GJA1. Interacts (via PDZ domains) with ANKRD2. Interacts with POPDC1 (via the C-terminus cytoplasmic tail). Interacts with GJA12 and KIRREL1. Interacts with HSPA4. Interacts (via ZU5 domain) with MYZAP. Interacts with DLL1. Interacts with USP53 (via the C-terminal region). Interacts with DNMBP (via C-terminal domain); required for the apical cell-cell junction localization of DNMBP. Interacts with SPEF1. Interacts (via N-terminus) with CTNNA1. Interacts with CLDN18. Interacts with CLDN16 (via TRV motif); this is a prerequisite for anchoring of CLDN16 at the tight junction. Interacts with PKP1; the interaction facilitates TJP1/ZO-1 localization to the plasma membrane. Interacts with PATJ (via PDZ1-6 domains); the interaction is required for attachment and extension of TJP1/ZO1 condensates along the apical cell interface. In terms of processing, phosphorylated at tyrosine redidues in response to epidermal growth factor (EGF). This response is dependent on an intact actin microfilament system. Dephosphorylated by PTPRJ. Expressed between ameloblasts, at ameloblast-ameloblast junctions and in the stratum intermedium during pre-secretory and secretory stages of tooth development (at protein level).

Its subcellular location is the cell membrane. It localises to the cell junction. The protein resides in the tight junction. It is found in the gap junction. The protein localises to the cytoplasm. Its subcellular location is the myofibril. It localises to the sarcomere. The protein resides in the i band. Tjp1, TjpP2, and Tjp3 are closely related scaffolding proteins that link tight junction (TJ) transmembrane proteins such as claudins, junctional adhesion molecules, and occludin to the actin cytoskeleton. Forms a multistranded TJP1/ZO1 condensate which elongates to form a tight junction belt, the belt is anchored at the apical cell membrane via interaction with PATJ. The tight junction acts to limit movement of substances through the paracellular space and as a boundary between the compositionally distinct apical and basolateral plasma membrane domains of epithelial and endothelial cells. Necessary for lumenogenesis, and particularly efficient epithelial polarization and barrier formation. Plays a role in the regulation of cell migration by targeting Cdc42bpb to the leading edge of migrating cells. Plays an important role in podosome formation and associated function, thus regulating cell adhesion and matrix remodeling. With Tjp2 and TJjp3, participates in the junctional retention and stability of the transcription factor Dbpa, but is not involved in its shuttling to the nucleus. May play a role in mediating cell morphology changes during ameloblast differentiation via its role in tight junctions. In Mus musculus (Mouse), this protein is Tight junction protein 1.